The following is a 183-amino-acid chain: MKGGKRVQPARPNRINKEIRATEVRLTGVDGEQIGIVSLNEALEKAEEAGVDLVEISPNAEPPVCRIMDYGKFLYEKSKSTKEQKKKQKVIQVKEIKFRPGTDDGDYQVKLRNLIRFLEDGDKAKITLRFRGREMAHQQIGMEVLNRVKKDLTEDSDLAVVESFPTRIEGRQMIMVLAPKKRQ.

The protein belongs to the IF-3 family. In terms of assembly, monomer.

Its subcellular location is the cytoplasm. IF-3 binds to the 30S ribosomal subunit and shifts the equilibrium between 70S ribosomes and their 50S and 30S subunits in favor of the free subunits, thus enhancing the availability of 30S subunits on which protein synthesis initiation begins. The polypeptide is Translation initiation factor IF-3 (Yersinia enterocolitica serotype O:8 / biotype 1B (strain NCTC 13174 / 8081)).